Consider the following 72-residue polypeptide: Translation initiation factor IF-1 (72 aa).

The S1-like domain maps to 1–72; the sequence is MAKEEAITVD…SKGRITYRKK (72 aa).

Belongs to the IF-1 family. As to quaternary structure, component of the 30S ribosomal translation pre-initiation complex which assembles on the 30S ribosome in the order IF-2 and IF-3, IF-1 and N-formylmethionyl-tRNA(fMet); mRNA recruitment can occur at any time during PIC assembly.

The protein resides in the cytoplasm. Its function is as follows. One of the essential components for the initiation of protein synthesis. Stabilizes the binding of IF-2 and IF-3 on the 30S subunit to which N-formylmethionyl-tRNA(fMet) subsequently binds. Helps modulate mRNA selection, yielding the 30S pre-initiation complex (PIC). Upon addition of the 50S ribosomal subunit IF-1, IF-2 and IF-3 are released leaving the mature 70S translation initiation complex. The protein is Translation initiation factor IF-1 of Leptospira borgpetersenii serovar Hardjo-bovis (strain L550).